Consider the following 112-residue polypeptide: Cytoplasmic envelopment protein 3 (112 aa).

A lipid anchor (N-myristoyl glycine; by host) is attached at Gly-2. The tract at residues 84–112 is disordered; the sequence is GANKGGGKRTSSLKSAKNGAGVKKKVRAL.

It belongs to the herpesviridae cytoplasmic envelopment protein 3 family. As to quaternary structure, interacts with cytoplasmic envelopment protein 2; this interaction is essential for the proper localization of each protein to the assembly complex and thus for the production of infectious virus. In terms of processing, myristoylation and palmitoylation (probably on one or more of the nearby cysteines at the N-terminus) enable membrane-binding and Golgi apparatus-specific targeting and are essential for efficient packaging. Phosphorylated. Phosphorylation does not seem to be required for recycling to the host Golgi apparatus. Packaging is selective for underphosphorylated forms.

The protein localises to the virion tegument. It localises to the virion membrane. The protein resides in the host cell membrane. It is found in the host Golgi apparatus membrane. Functionally, plays an important role in the cytoplasmic envelopment of tegument proteins and capsids during the assembly and egress processes. Also participates in viral entry at the fusion step probably by regulating the core fusion machinery. This is Cytoplasmic envelopment protein 3 (UL99) from Murid herpesvirus 1 (strain K181) (MuHV-1).